Consider the following 85-residue polypeptide: UPF0297 protein CPR_1749 (85 aa).

This sequence belongs to the UPF0297 family.

The protein is UPF0297 protein CPR_1749 of Clostridium perfringens (strain SM101 / Type A).